The chain runs to 496 residues: Stomatal closure-related actin-binding protein 1 (496 aa).

A coiled-coil region spans residues 126–269 (RNKDDVEEAI…FLQLQKKLAM (144 aa)).

This sequence belongs to the SCAB family. As to quaternary structure, dimer. Dimerization is required for actin-binding activity. In terms of tissue distribution, expressed in roots, stems, leaves, flowers, siliques and guard cells.

It localises to the cytoplasm. The protein resides in the cytoskeleton. Plant-specific actin binding protein that bundles and stabilizes microfilaments (MFs). Has no nucleation or capping activity. Regulates MF reorganization during stomatal closure. The binding to F-actin is insensitive to Ca(2+) and pH. Binds weakly to inositol phosphates. This chain is Stomatal closure-related actin-binding protein 1, found in Arabidopsis thaliana (Mouse-ear cress).